A 512-amino-acid chain; its full sequence is Putative ribose/galactose/methyl galactoside import ATP-binding protein 1 (512 aa).

2 consecutive ABC transporter domains span residues 14–251 and 262–507; these read IALT…VGRQ and TSAN…TQRE. 46–53 is a binding site for ATP; sequence GENGAGKS.

It belongs to the ABC transporter superfamily. Carbohydrate importer 2 (CUT2) (TC 3.A.1.2) family.

The protein resides in the cell inner membrane. The enzyme catalyses D-ribose(out) + ATP + H2O = D-ribose(in) + ADP + phosphate + H(+). It carries out the reaction D-galactose(out) + ATP + H2O = D-galactose(in) + ADP + phosphate + H(+). Part of an ABC transporter complex involved in carbohydrate import. Could be involved in ribose, galactose and/or methyl galactoside import. Responsible for energy coupling to the transport system. The protein is Putative ribose/galactose/methyl galactoside import ATP-binding protein 1 of Burkholderia lata (strain ATCC 17760 / DSM 23089 / LMG 22485 / NCIMB 9086 / R18194 / 383).